The primary structure comprises 204 residues: Rho GDP-dissociation inhibitor 1 (204 aa).

The tract at residues 1 to 36 is disordered; sequence MAEQEPTAEQLAQIAAENEEDEHSVNYKPPAQKSIQ. Ala2 is modified (N-acetylalanine). Position 34 is a phosphoserine (Ser34). Position 43 is an N6-acetyllysine (Lys43). Residue Ser47 is modified to Phosphoserine. An N6-acetyllysine mark is found at Lys105 and Lys127. Glycyl lysine isopeptide (Lys-Gly) (interchain with G-Cter in SUMO1); alternate cross-links involve residues Lys138 and Lys141. Residues Lys138 and Lys141 each participate in a glycyl lysine isopeptide (Lys-Gly) (interchain with G-Cter in SUMO2); alternate cross-link. At Lys141 the chain carries N6-acetyllysine; alternate. At Lys141 the chain carries N6-succinyllysine; alternate. Lys178 is subject to N6-acetyllysine.

Belongs to the Rho GDI family. As to quaternary structure, monomer. Interacts with FER. Interacts with PLXNB3. Forms a heterodimer with RAC1. Interacts with RHOA, the affinity is increased by three orders of magnitude when RHOA is prenylated. Interacts with PSMD10; the interaction increases ARHGDIA association with RHOA, leading to ARHGDIA-mediated inactivation of RHOA and ROCK and prolonged AKT activation. Interacts with KANK2; the interaction is direct and may regulate the interaction of ARHGDIA with RHOA, RAC1 and CDC42. Interacts with RHOC. Interacts with CDC42. Interacts with NGFR (via death domain); NGFR binding decreases the affinity for RHOA.

The protein resides in the cytoplasm. In terms of biological role, controls Rho proteins homeostasis. Regulates the GDP/GTP exchange reaction of the Rho proteins by inhibiting the dissociation of GDP from them, and the subsequent binding of GTP to them. Retains Rho proteins such as CDC42, RAC1 and RHOA in an inactive cytosolic pool, regulating their stability and protecting them from degradation. Actively involved in the recycling and distribution of activated Rho GTPases in the cell, mediates extraction from membranes of both inactive and activated molecules due its exceptionally high affinity for prenylated forms. Through the modulation of Rho proteins, may play a role in cell motility regulation. In glioma cells, inhibits cell migration and invasion by mediating the signals of SEMA5A and PLXNB3 that lead to inactivation of RAC1. The protein is Rho GDP-dissociation inhibitor 1 (ARHGDIA) of Homo sapiens (Human).